The following is a 540-amino-acid chain: Sesquiterpene synthase 15b (540 aa).

Residues Asp292, Asp296, and Glu445 each contribute to the Mg(2+) site. Residues 292-296 (DDIYD) carry the DDXXD motif motif.

This sequence belongs to the terpene synthase family. Tpsa subfamily. The cofactor is Mg(2+). Mn(2+) is required as a cofactor.

The catalysed reaction is (2E,6E)-farnesyl diphosphate = germacrene A + diphosphate. Its pathway is secondary metabolite biosynthesis; terpenoid biosynthesis. Functionally, sesquiterpene synthase involved in the biosynthesis of volatile compounds. Mediates the conversion of (2E,6E)-farnesyl diphosphate (FPP) into germacrene A. The polypeptide is Sesquiterpene synthase 15b (Solanum habrochaites (Wild tomato)).